The following is a 125-amino-acid chain: Holo-[acyl-carrier-protein] synthase (125 aa).

2 residues coordinate Mg(2+): Asp-8 and Glu-56.

This sequence belongs to the P-Pant transferase superfamily. AcpS family. Requires Mg(2+) as cofactor.

The protein resides in the cytoplasm. It catalyses the reaction apo-[ACP] + CoA = holo-[ACP] + adenosine 3',5'-bisphosphate + H(+). Functionally, transfers the 4'-phosphopantetheine moiety from coenzyme A to a Ser of acyl-carrier-protein. In Borrelia hermsii (strain HS1 / DAH), this protein is Holo-[acyl-carrier-protein] synthase.